Here is a 528-residue protein sequence, read N- to C-terminus: Transcription factor cghF (528 aa).

Residues 232–283 form a disordered region; it reads TPPNHATSSTPTSTRTPPTYHPHGPRPKSPLSSTPSPRTESTKSAAPSRDLA. Residues 238–249 show a composition bias toward low complexity; it reads TSSTPTSTRTPP. Positions 261–276 are enriched in polar residues; it reads PLSSTPSPRTESTKSA.

It is found in the nucleus. Its function is as follows. Transcription factor that regulates the expression of the gene cluster that mediates the biosynthesis of the tetramic acid Sch210972, a potential anti-HIV fungal natural product that contains a decalin core. This is Transcription factor cghF from Chaetomium globosum (strain ATCC 6205 / CBS 148.51 / DSM 1962 / NBRC 6347 / NRRL 1970) (Soil fungus).